Consider the following 176-residue polypeptide: MFHFLALTPLAHSEGFGLNTNILETNILNLAAVFALLAYVGTDFVSSLLKTRKESILKSLRDADERYQDAVNQLKQALQELETARTNAAEIRRQSEINAEAIRQRLELLTQEEMARLEEAKETIIKLEEEKAVAEVCTKVISMALVRAEKKIISSMDEAMHRRVMDMYLNLLREVY.

A helical membrane pass occupies residues 27-49 (ILNLAAVFALLAYVGTDFVSSLL).

The protein belongs to the ATPase B chain family. F-type ATPases have 2 components, F(1) - the catalytic core - and F(0) - the membrane proton channel. F(1) has five subunits: alpha(3), beta(3), gamma(1), delta(1), epsilon(1). F(0) has four main subunits: a(1), b(1), b'(1) and c(10-14). The alpha and beta chains form an alternating ring which encloses part of the gamma chain. F(1) is attached to F(0) by a central stalk formed by the gamma and epsilon chains, while a peripheral stalk is formed by the delta, b and b' chains.

It is found in the plastid. The protein resides in the chloroplast thylakoid membrane. Its function is as follows. F(1)F(0) ATP synthase produces ATP from ADP in the presence of a proton or sodium gradient. F-type ATPases consist of two structural domains, F(1) containing the extramembraneous catalytic core and F(0) containing the membrane proton channel, linked together by a central stalk and a peripheral stalk. During catalysis, ATP synthesis in the catalytic domain of F(1) is coupled via a rotary mechanism of the central stalk subunits to proton translocation. Functionally, component of the F(0) channel, it forms part of the peripheral stalk, linking F(1) to F(0). This Nephroselmis olivacea (Green alga) protein is ATP synthase subunit b, chloroplastic.